The chain runs to 149 residues: Calmodulin-2 (149 aa).

Ala2 bears the N-acetylalanine mark. EF-hand domains follow at residues 8 to 43, 44 to 79, 81 to 116, and 117 to 149; these read EQIA…LGQN, PTEG…KMKD, DSEE…PGEK, and LTDE…MTSK. 14 residues coordinate Ca(2+): Asp21, Asp23, Asn25, Asn27, Glu32, Asp57, Asp59, Asn61, Thr63, Glu68, Asp94, Asp96, Asn98, and Glu105. Lys116 is modified (N6,N6,N6-trimethyllysine). 5 residues coordinate Ca(2+): Asp130, Asp132, Asp134, Gln136, and Glu141.

The protein belongs to the calmodulin family.

Calmodulin mediates the control of a large number of enzymes, ion channels and other proteins by Ca(2+). Among the enzymes to be stimulated by the calmodulin-Ca(2+) complex are a number of protein kinases and phosphatases. The chain is Calmodulin-2 (CAM2) from Branchiostoma floridae (Florida lancelet).